Consider the following 503-residue polypeptide: Probable cytosol aminopeptidase (503 aa).

Mn(2+)-binding residues include Lys274 and Asp279. Lys286 is a catalytic residue. Residues Asp297, Asp356, and Glu358 each contribute to the Mn(2+) site. Arg360 is an active-site residue.

It belongs to the peptidase M17 family. It depends on Mn(2+) as a cofactor.

It is found in the cytoplasm. It carries out the reaction Release of an N-terminal amino acid, Xaa-|-Yaa-, in which Xaa is preferably Leu, but may be other amino acids including Pro although not Arg or Lys, and Yaa may be Pro. Amino acid amides and methyl esters are also readily hydrolyzed, but rates on arylamides are exceedingly low.. It catalyses the reaction Release of an N-terminal amino acid, preferentially leucine, but not glutamic or aspartic acids.. Functionally, presumably involved in the processing and regular turnover of intracellular proteins. Catalyzes the removal of unsubstituted N-terminal amino acids from various peptides. This Burkholderia lata (strain ATCC 17760 / DSM 23089 / LMG 22485 / NCIMB 9086 / R18194 / 383) protein is Probable cytosol aminopeptidase.